Here is a 298-residue protein sequence, read N- to C-terminus: Ribosomal RNA small subunit methyltransferase H (298 aa).

S-adenosyl-L-methionine-binding positions include 46–48 (GGH), Asp65, Phe92, Asp108, and His115.

It belongs to the methyltransferase superfamily. RsmH family.

It localises to the cytoplasm. The catalysed reaction is cytidine(1402) in 16S rRNA + S-adenosyl-L-methionine = N(4)-methylcytidine(1402) in 16S rRNA + S-adenosyl-L-homocysteine + H(+). Its function is as follows. Specifically methylates the N4 position of cytidine in position 1402 (C1402) of 16S rRNA. This chain is Ribosomal RNA small subunit methyltransferase H, found in Nostoc punctiforme (strain ATCC 29133 / PCC 73102).